The following is a 120-amino-acid chain: Large ribosomal subunit protein bL12 (120 aa).

Belongs to the bacterial ribosomal protein bL12 family. As to quaternary structure, homodimer. Part of the ribosomal stalk of the 50S ribosomal subunit. Forms a multimeric L10(L12)X complex, where L10 forms an elongated spine to which 2 to 4 L12 dimers bind in a sequential fashion. Binds GTP-bound translation factors.

Functionally, forms part of the ribosomal stalk which helps the ribosome interact with GTP-bound translation factors. Is thus essential for accurate translation. The polypeptide is Large ribosomal subunit protein bL12 (Clostridium botulinum (strain Alaska E43 / Type E3)).